The chain runs to 390 residues: Large ribosomal subunit protein mL44 (390 aa).

The N-terminal 59 residues, 1-59 (MGIVLKRAIAAGMKPFPNSTWHWSRTIRPFSQHLSSTCFLQQSSRFTSKRYLHLSTLTQ), are a transit peptide targeting the mitochondrion. An RNase III domain is found at 139 to 205 (AFVNTVPTNK…LAHIAKYWGI (67 aa)). Residues 302 to 372 (QPTRELAMLC…ATDALMKWYC (71 aa)) enclose the DRBM domain.

It belongs to the ribonuclease III family. Mitochondrion-specific ribosomal protein mL44 subfamily. In terms of assembly, component of the mitochondrial large ribosomal subunit (mt-LSU). Mature yeast 74S mitochondrial ribosomes consist of a small (37S) and a large (54S) subunit. The 37S small subunit contains a 15S ribosomal RNA (15S mt-rRNA) and 34 different proteins. The 54S large subunit contains a 21S rRNA (21S mt-rRNA) and 46 different proteins. mL44 forms a heterodimer with mL57 and stabilizes rRNA expansion segments 1/2 at a membrane-facing protuberance close to the point of attachment of the ribosome to the translocon in the membrane.

It is found in the mitochondrion. In terms of biological role, component of the mitochondrial ribosome (mitoribosome), a dedicated translation machinery responsible for the synthesis of mitochondrial genome-encoded proteins, including at least some of the essential transmembrane subunits of the mitochondrial respiratory chain. The mitoribosomes are attached to the mitochondrial inner membrane and translation products are cotranslationally integrated into the membrane. The polypeptide is Large ribosomal subunit protein mL44 (MRPL3) (Saccharomyces cerevisiae (strain ATCC 204508 / S288c) (Baker's yeast)).